A 147-amino-acid chain; its full sequence is NADH-quinone oxidoreductase subunit A (147 aa).

A run of 3 helical transmembrane segments spans residues 16–36 (FAIF…GGWF), 68–88 (FYLV…LFAW), and 98–118 (VGFV…VYLV).

The protein belongs to the complex I subunit 3 family. NDH-1 is composed of 13 different subunits. Subunits NuoA, H, J, K, L, M, N constitute the membrane sector of the complex.

Its subcellular location is the cell inner membrane. It catalyses the reaction a quinone + NADH + 5 H(+)(in) = a quinol + NAD(+) + 4 H(+)(out). Its function is as follows. NDH-1 shuttles electrons from NADH, via FMN and iron-sulfur (Fe-S) centers, to quinones in the respiratory chain. The immediate electron acceptor for the enzyme in this species is believed to be ubiquinone. Couples the redox reaction to proton translocation (for every two electrons transferred, four hydrogen ions are translocated across the cytoplasmic membrane), and thus conserves the redox energy in a proton gradient. This Citrobacter koseri (strain ATCC BAA-895 / CDC 4225-83 / SGSC4696) protein is NADH-quinone oxidoreductase subunit A.